Consider the following 420-residue polypeptide: MWWRDLTRLRLWLKREAIPGEGRKAAKVNAGVGEKGIYTASSRGGPPSARSKAVTVVAEGAASRSWLSMDAPELGPGLVERLEQLATCPLCGGSFEDPVLLACEHSFCRACLARRWGTPPATGTEASPTACPCCGLPCPRRSLRSNVRLAVEVRISRELREKLAEPGARAGRRRGGRIPTMGCLDLPGEDMRKTWRRFEVPTPKSSNSEDDLPEDYPVVKNMLHRLTADLTLDPGTAHRRLLISADRRSVQLAPPGTPAPPDGPKRFDQLPAVLGAQGFGAGRHCWEVETADAASCRDSSGEDEDDEESHYAVGAAGESVQRKGCVRLCPAGAVWAVEGRGGRLWALTAPEPTLLGGVEPPPRRIRVDLDWERGRVAFYDGRSLDLLYAFQAPGPLGERIFPLFCTCDPRAPLRIVPAES.

The RING-type zinc-finger motif lies at 88–135; sequence CPLCGGSFEDPVLLACEHSFCRACLARRWGTPPATGTEASPTACPCCG. The B30.2/SPRY domain occupies 210–420; it reads DDLPEDYPVV…APLRIVPAES (211 aa). A disordered region spans residues 246–265; it reads DRRSVQLAPPGTPAPPDGPK.

Its subcellular location is the cytoplasm. The catalysed reaction is S-ubiquitinyl-[E2 ubiquitin-conjugating enzyme]-L-cysteine + [acceptor protein]-L-lysine = [E2 ubiquitin-conjugating enzyme]-L-cysteine + N(6)-ubiquitinyl-[acceptor protein]-L-lysine.. It participates in protein modification; protein ubiquitination. Functionally, plays an inhibitory role in anti-RNA viral innate immunity by targeting the adapter DDX3X and promoting its 'Lys-48'-linked polyubiquitination. Alternatively, enhances the cGAS-STING pathway activation by promoting 'Lys-63'-linked ubiquitination of STING1, facilitating the STING1-TBK1 complex formation and STING1 activation. This is RING finger protein 39 (RNF39) from Pan troglodytes (Chimpanzee).